A 168-amino-acid chain; its full sequence is Ribosome maturation factor RimM (168 aa).

One can recognise a PRC barrel domain in the interval glutamate 95–tyrosine 168.

Belongs to the RimM family. Binds ribosomal protein uS19.

It localises to the cytoplasm. Its function is as follows. An accessory protein needed during the final step in the assembly of 30S ribosomal subunit, possibly for assembly of the head region. Essential for efficient processing of 16S rRNA. May be needed both before and after RbfA during the maturation of 16S rRNA. It has affinity for free ribosomal 30S subunits but not for 70S ribosomes. The protein is Ribosome maturation factor RimM of Nitrosospira multiformis (strain ATCC 25196 / NCIMB 11849 / C 71).